Here is a 90-residue protein sequence, read N- to C-terminus: MNKSQLIDKIAAGADISKAAAGRALDAIIASVTESLKEGDDVALVGFGTFAVKERAARTGRNPQTGKEITIAAAKVPSFRAGKALKDAVN.

It belongs to the bacterial histone-like protein family. Heterodimer of an alpha and a beta chain.

Histone-like DNA-binding protein which is capable of wrapping DNA to stabilize it, and thus to prevent its denaturation under extreme environmental conditions. The chain is DNA-binding protein HU-beta (hupB) from Escherichia coli O6:H1 (strain CFT073 / ATCC 700928 / UPEC).